A 637-amino-acid polypeptide reads, in one-letter code: MSQQETHGFQTEVKQLLHLMIHSLYSNKEIFLRELVSNAADAADKLRYLALTNDALYEGDGELRVRISADKEKGTVTIEDNGVGMTRDGVIEHLGTIAKSGTADFFKNLSGESSKDSQLIGQFGVGFYSAFIVAKKVTVRTRAAGHKADEAVLWESEGEGNFTVDTITKASRGTEITLHLRDEEKEFADDWRLRSIITKYSDHISVPVEMWQEGTPESDGADGEKIPATEGQWKVMNKATALWMRSKADISDEEYQEFYKHISHDYTDALLWSHNRVEGKQEYTNLLYIPAKAPWDMWNRDRKHGLKLFVQRVFIMDDAEQFMPSYLRFVQGLIDSNDLPLNVSREILQDNHVTKAMRTGITKRVLGMLEKLAKDDAEKYQQFWAEFGQVLKEGPAEDFANRERIAGLLRFASTHTGSAAPTVSLDDYISRMKEGQTKIYYIVADSHEAAANSPHLELLRKKGIEVLLMSERIDEWLINHLTEYKEKQLHSVTRGDLELGELEDASEKEAQEKLEQESVALVERIKAALGSTVADVKVTSRLTDTPACVVAGEGEMSTQMIKLMQAAGQPVPEVKPTFEINPAHPLVSRLNDLQDEAAFADWSNLLLQQAQLSEKGSLADPSAFIKLMNQMLLANMK.

An a; substrate-binding region spans residues methionine 1 to arginine 345. A b region spans residues glutamate 346 to lysine 562. Positions leucine 563 to lysine 637 are c.

It belongs to the heat shock protein 90 family. In terms of assembly, homodimer.

The protein localises to the cytoplasm. Functionally, molecular chaperone. Has ATPase activity. The polypeptide is Chaperone protein HtpG (Shewanella baltica (strain OS185)).